The chain runs to 198 residues: Holliday junction branch migration complex subunit RuvA (198 aa).

A domain I region spans residues 1-64 (MYEYIKGEYM…EDFIGLYGFE (64 aa)). The tract at residues 65-143 (SLEELDMFKL…SDELLNCIDE (79 aa)) is domain II. The interval 144–154 (FDDVTQDNSLA) is flexible linker. The domain III stretch occupies residues 154–198 (ALSEALSALISLGYTEKEAEKVLKDVDKSESVENIIKSALVKLMG).

It belongs to the RuvA family. In terms of assembly, homotetramer. Forms an RuvA(8)-RuvB(12)-Holliday junction (HJ) complex. HJ DNA is sandwiched between 2 RuvA tetramers; dsDNA enters through RuvA and exits via RuvB. An RuvB hexamer assembles on each DNA strand where it exits the tetramer. Each RuvB hexamer is contacted by two RuvA subunits (via domain III) on 2 adjacent RuvB subunits; this complex drives branch migration. In the full resolvosome a probable DNA-RuvA(4)-RuvB(12)-RuvC(2) complex forms which resolves the HJ.

Its subcellular location is the cytoplasm. Functionally, the RuvA-RuvB-RuvC complex processes Holliday junction (HJ) DNA during genetic recombination and DNA repair, while the RuvA-RuvB complex plays an important role in the rescue of blocked DNA replication forks via replication fork reversal (RFR). RuvA specifically binds to HJ cruciform DNA, conferring on it an open structure. The RuvB hexamer acts as an ATP-dependent pump, pulling dsDNA into and through the RuvAB complex. HJ branch migration allows RuvC to scan DNA until it finds its consensus sequence, where it cleaves and resolves the cruciform DNA. The polypeptide is Holliday junction branch migration complex subunit RuvA (Clostridium botulinum (strain Alaska E43 / Type E3)).